The chain runs to 626 residues: Beta-galactosidase large subunit (626 aa).

Residue glutamate 466 is the Proton donor of the active site. The active-site Nucleophile is glutamate 534.

This sequence belongs to the glycosyl hydrolase 2 family. As to quaternary structure, heterodimer of a large (LacL) and a small subunit (LacM).

The enzyme catalyses Hydrolysis of terminal non-reducing beta-D-galactose residues in beta-D-galactosides.. Component of a beta-galactosidase that displays activity with the artificial chromogenic substrate o-nitrophenyl-beta-D-galactopyranoside (ONPG). The chain is Beta-galactosidase large subunit from Leuconostoc lactis.